The primary structure comprises 105 residues: MQGKALQDFVIDKIDDLKGQDIIALDVQGKSSITDCMIICTGTSSRHVMSIADHVVQESRAAGLLPLGVEGENSADWIVVDLGDVIVHVMQEESRRLYELEKLWS.

This sequence belongs to the Iojap/RsfS family. As to quaternary structure, interacts with ribosomal protein uL14 (rplN).

The protein resides in the cytoplasm. Functions as a ribosomal silencing factor. Interacts with ribosomal protein uL14 (rplN), blocking formation of intersubunit bridge B8. Prevents association of the 30S and 50S ribosomal subunits and the formation of functional ribosomes, thus repressing translation. The protein is Ribosomal silencing factor RsfS of Escherichia coli O6:H1 (strain CFT073 / ATCC 700928 / UPEC).